The chain runs to 116 residues: Iron-sulfur cluster insertion protein ErpA (116 aa).

Positions 44, 108, and 110 each coordinate iron-sulfur cluster.

This sequence belongs to the HesB/IscA family. As to quaternary structure, homodimer. Requires iron-sulfur cluster as cofactor.

Functionally, required for insertion of 4Fe-4S clusters for at least IspG. This Shewanella denitrificans (strain OS217 / ATCC BAA-1090 / DSM 15013) protein is Iron-sulfur cluster insertion protein ErpA.